Here is a 257-residue protein sequence, read N- to C-terminus: Isoprenyl transferase 1 (257 aa).

D37 is a catalytic residue. Residue D37 coordinates Mg(2+). Substrate-binding positions include 38-41 (GNRR), W42, H54, and 82-84 (STD). N85 acts as the Proton acceptor in catalysis. Substrate-binding positions include F86, R88, R206, and 212 to 214 (RLS). Position 225 (E225) interacts with Mg(2+).

The protein belongs to the UPP synthase family. In terms of assembly, homodimer. Requires Mg(2+) as cofactor.

In terms of biological role, catalyzes the condensation of isopentenyl diphosphate (IPP) with allylic pyrophosphates generating different type of terpenoids. This chain is Isoprenyl transferase 1, found in Streptomyces avermitilis (strain ATCC 31267 / DSM 46492 / JCM 5070 / NBRC 14893 / NCIMB 12804 / NRRL 8165 / MA-4680).